The chain runs to 449 residues: Tubulin beta-6 chain (449 aa).

The GTP site is built by Gln-11, Glu-69, Ser-138, Gly-142, Thr-143, Gly-144, Asn-204, and Asn-226. A Mg(2+)-binding site is contributed by Glu-69. Positions 425-449 (YQDATADDEGEYEEDEDEEEILDHE) are disordered. The segment covering 429-449 (TADDEGEYEEDEDEEEILDHE) has biased composition (acidic residues).

This sequence belongs to the tubulin family. Dimer of alpha and beta chains. A typical microtubule is a hollow water-filled tube with an outer diameter of 25 nm and an inner diameter of 15 nM. Alpha-beta heterodimers associate head-to-tail to form protofilaments running lengthwise along the microtubule wall with the beta-tubulin subunit facing the microtubule plus end conferring a structural polarity. Microtubules usually have 13 protofilaments but different protofilament numbers can be found in some organisms and specialized cells. Requires Mg(2+) as cofactor.

Its subcellular location is the cytoplasm. The protein resides in the cytoskeleton. Functionally, tubulin is the major constituent of microtubules, a cylinder consisting of laterally associated linear protofilaments composed of alpha- and beta-tubulin heterodimers. Microtubules grow by the addition of GTP-tubulin dimers to the microtubule end, where a stabilizing cap forms. Below the cap, tubulin dimers are in GDP-bound state, owing to GTPase activity of alpha-tubulin. The protein is Tubulin beta-6 chain (TUBB6) of Arabidopsis thaliana (Mouse-ear cress).